We begin with the raw amino-acid sequence, 334 residues long: Holliday junction branch migration complex subunit RuvB (334 aa).

A large ATPase domain (RuvB-L) region spans residues 1 to 179 (MTHKISVLHQ…FAFTGRVDYY (179 aa)). ATP contacts are provided by residues Leu-18, Arg-19, Gly-60, Lys-63, Thr-64, Ser-65, 126–128 (EDF), Arg-169, Tyr-179, and Arg-216. Thr-64 provides a ligand contact to Mg(2+). Residues 180 to 250 (TDEDLVSILS…VAEKALAMLL (71 aa)) are small ATPAse domain (RuvB-S). The tract at residues 253 to 334 (NLGLNEIDIK…RNPKDRWGEE (82 aa)) is head domain (RuvB-H). Residues Arg-308 and Arg-313 each contribute to the DNA site.

It belongs to the RuvB family. As to quaternary structure, homohexamer. Forms an RuvA(8)-RuvB(12)-Holliday junction (HJ) complex. HJ DNA is sandwiched between 2 RuvA tetramers; dsDNA enters through RuvA and exits via RuvB. An RuvB hexamer assembles on each DNA strand where it exits the tetramer. Each RuvB hexamer is contacted by two RuvA subunits (via domain III) on 2 adjacent RuvB subunits; this complex drives branch migration. In the full resolvosome a probable DNA-RuvA(4)-RuvB(12)-RuvC(2) complex forms which resolves the HJ.

It localises to the cytoplasm. The enzyme catalyses ATP + H2O = ADP + phosphate + H(+). In terms of biological role, the RuvA-RuvB-RuvC complex processes Holliday junction (HJ) DNA during genetic recombination and DNA repair, while the RuvA-RuvB complex plays an important role in the rescue of blocked DNA replication forks via replication fork reversal (RFR). RuvA specifically binds to HJ cruciform DNA, conferring on it an open structure. The RuvB hexamer acts as an ATP-dependent pump, pulling dsDNA into and through the RuvAB complex. RuvB forms 2 homohexamers on either side of HJ DNA bound by 1 or 2 RuvA tetramers; 4 subunits per hexamer contact DNA at a time. Coordinated motions by a converter formed by DNA-disengaged RuvB subunits stimulates ATP hydrolysis and nucleotide exchange. Immobilization of the converter enables RuvB to convert the ATP-contained energy into a lever motion, pulling 2 nucleotides of DNA out of the RuvA tetramer per ATP hydrolyzed, thus driving DNA branch migration. The RuvB motors rotate together with the DNA substrate, which together with the progressing nucleotide cycle form the mechanistic basis for DNA recombination by continuous HJ branch migration. Branch migration allows RuvC to scan DNA until it finds its consensus sequence, where it cleaves and resolves cruciform DNA. The polypeptide is Holliday junction branch migration complex subunit RuvB (Chlamydia trachomatis serovar L2 (strain ATCC VR-902B / DSM 19102 / 434/Bu)).